We begin with the raw amino-acid sequence, 75 residues long: Penaeidin-3k (75 aa).

The N-terminal stretch at 1–19 (MRLVVCLVFLASFALVCQG) is a signal peptide. Position 20 is a pyrrolidone carboxylic acid (Gln-20). 3 cysteine pairs are disulfide-bonded: Cys-44/Cys-59, Cys-48/Cys-66, and Cys-60/Cys-67. A Serine amide modification is found at Ser-74.

This sequence belongs to the penaeidin family.

It localises to the cytoplasmic granule. In terms of biological role, antibacterial and antifungal activity. Presents chitin-binding activity. The protein is Penaeidin-3k of Penaeus setiferus (Atlantic white shrimp).